Consider the following 241-residue polypeptide: tRNA pseudouridine synthase B (241 aa).

Asp45 (nucleophile) is an active-site residue.

Belongs to the pseudouridine synthase TruB family. Type 1 subfamily.

The catalysed reaction is uridine(55) in tRNA = pseudouridine(55) in tRNA. Responsible for synthesis of pseudouridine from uracil-55 in the psi GC loop of transfer RNAs. The chain is tRNA pseudouridine synthase B from Opitutus terrae (strain DSM 11246 / JCM 15787 / PB90-1).